The chain runs to 188 residues: Ion-translocating oxidoreductase complex subunit B (188 aa).

The hydrophobic stretch occupies residues 1 to 23 (MIEAAVSMSALGLGLGLLLGVAA). Residues 29-88 (ESPPIVDAIEGILPGTNCGACGYPGCRGLAEAMSEGAAPVTACAPGGRDVALALAAIVET) enclose the 4Fe-4S domain. Positions 46, 49, 54, 71, 113, 116, 119, 123, 143, 146, 149, and 153 each coordinate [4Fe-4S] cluster. 2 4Fe-4S ferredoxin-type domains span residues 104–133 (TVAF…GANR) and 134–163 (QIHT…ARVK).

The protein belongs to the 4Fe4S bacterial-type ferredoxin family. RnfB subfamily. In terms of assembly, the complex is composed of six subunits: RnfA, RnfB, RnfC, RnfD, RnfE and RnfG. It depends on [4Fe-4S] cluster as a cofactor.

It localises to the cellular chromatophore membrane. In terms of biological role, part of a membrane-bound complex that couples electron transfer with translocation of ions across the membrane. This Cereibacter sphaeroides (strain ATCC 17023 / DSM 158 / JCM 6121 / CCUG 31486 / LMG 2827 / NBRC 12203 / NCIMB 8253 / ATH 2.4.1.) (Rhodobacter sphaeroides) protein is Ion-translocating oxidoreductase complex subunit B.